The following is a 186-amino-acid chain: MGLKEDRWITDMALPHNMIEPFCENQVGKNVVSYGLSSYGYDIRVSNEFKIFTNINATVVDPKNFDEANVVDFIGDICIVPPNSFALARTVEYFRIPRDVLAICLGKSTYARCGIIVNVTPFEPEFEGHITIEISNTTPLPAKIYANEGIAQVLFLQGDADCEVSYKDKKGKYQKQEGITLPRILK.

107 to 112 (KSTYAR) provides a ligand contact to dCTP. Glutamate 133 functions as the Proton donor/acceptor in the catalytic mechanism. DCTP contacts are provided by glutamine 152, tyrosine 166, lysine 175, and glutamine 176.

It belongs to the dCTP deaminase family. Homotrimer.

The catalysed reaction is dCTP + H2O + H(+) = dUTP + NH4(+). Its pathway is pyrimidine metabolism; dUMP biosynthesis; dUMP from dCTP (dUTP route): step 1/2. Its function is as follows. Catalyzes the deamination of dCTP to dUTP. In Wolinella succinogenes (strain ATCC 29543 / DSM 1740 / CCUG 13145 / JCM 31913 / LMG 7466 / NCTC 11488 / FDC 602W) (Vibrio succinogenes), this protein is dCTP deaminase.